A 412-amino-acid chain; its full sequence is BSD domain-containing protein 1 (412 aa).

The region spanning 145–197 is the BSD domain; the sequence is WLSTFSLEERKAEISELLVSSPAIRALYTKMVPAAVAHAEFWQRYFYKVFQLE. Over residues 208–217 the composition is skewed to basic and acidic residues; the sequence is QRAEQTDHSE. Disordered stretches follow at residues 208–227, 253–272, and 298–412; these read QRAE…EDEE, VTVA…ASLS, and ESVT…ENWE. 2 stretches are compositionally biased toward polar residues: residues 259–272 and 298–308; these read PESS…ASLS and ESVTIRVTQPS. Ser308 is subject to Phosphoserine. Residues 328 to 349 are compositionally biased toward basic and acidic residues; it reads PEERPAPREETAREDMAQDLRV. Residues 353-372 show a composition bias toward polar residues; sequence NSDSGKSTPSNNGKKGSSTD. 2 stretches are compositionally biased toward acidic residues: residues 373–390 and 400–412; these read VSED…EEEV and TEEL…ENWE.

The protein is BSD domain-containing protein 1 (bsdc1) of Danio rerio (Zebrafish).